The primary structure comprises 210 residues: Large ribosomal subunit protein uL3 (210 aa).

It belongs to the universal ribosomal protein uL3 family. As to quaternary structure, part of the 50S ribosomal subunit. Forms a cluster with proteins L14 and L19.

Its function is as follows. One of the primary rRNA binding proteins, it binds directly near the 3'-end of the 23S rRNA, where it nucleates assembly of the 50S subunit. This is Large ribosomal subunit protein uL3 from Pseudothermotoga lettingae (strain ATCC BAA-301 / DSM 14385 / NBRC 107922 / TMO) (Thermotoga lettingae).